The sequence spans 363 residues: SWIRM domain-containing protein YOR338W (363 aa).

Disordered stretches follow at residues 1–22 (MLDNMQFHSPAPEHPQLNGGIN) and 186–208 (LYEDDGNRSENYDEESAQEVPVR). Positions 186–196 (LYEDDGNRSEN) are enriched in basic and acidic residues. The SWIRM domain maps to 266 to 363 (LKVEWKGSPM…LQDKHFEKYL (98 aa)).

This Saccharomyces cerevisiae (strain ATCC 204508 / S288c) (Baker's yeast) protein is SWIRM domain-containing protein YOR338W.